The sequence spans 190 residues: Putative manganese efflux pump MntP (190 aa).

The next 6 helical transmembrane spans lie at F3–V23, L37–I57, H72–W88, I111–V131, V138–H158, and F164–V184.

The protein belongs to the MntP (TC 9.B.29) family.

It is found in the cell membrane. Its function is as follows. Probably functions as a manganese efflux pump. In Corynebacterium glutamicum (strain ATCC 13032 / DSM 20300 / JCM 1318 / BCRC 11384 / CCUG 27702 / LMG 3730 / NBRC 12168 / NCIMB 10025 / NRRL B-2784 / 534), this protein is Putative manganese efflux pump MntP.